Here is a 264-residue protein sequence, read N- to C-terminus: Teichoic acids export ATP-binding protein TagH (264 aa).

One can recognise an ABC transporter domain in the interval 22–243 (ERLKDVIVPF…YEKFLNDFKK (222 aa)). Position 57 to 64 (57 to 64 (GINGSGKS)) interacts with ATP.

This sequence belongs to the ABC transporter superfamily. Teichoic acids exporter (TC 3.A.1.104.1) family. The complex is composed of two ATP-binding proteins (TagH) and two transmembrane proteins (TagG).

Its subcellular location is the cell membrane. It catalyses the reaction ATP + H2O + teichoic acidSide 1 = ADP + phosphate + teichoic acidSide 2.. Part of the ABC transporter complex TagGH involved in teichoic acids export. Responsible for energy coupling to the transport system. The protein is Teichoic acids export ATP-binding protein TagH of Staphylococcus saprophyticus subsp. saprophyticus (strain ATCC 15305 / DSM 20229 / NCIMB 8711 / NCTC 7292 / S-41).